Consider the following 60-residue polypeptide: Large ribosomal subunit protein bL32 (60 aa).

The segment at 1 to 43 is disordered; it reads MAVQQNKKSPSKRGMHRSHDALTNPPLAIEPTTGEIHLRHHIS.

Belongs to the bacterial ribosomal protein bL32 family.

The protein is Large ribosomal subunit protein bL32 of Nitrosomonas europaea (strain ATCC 19718 / CIP 103999 / KCTC 2705 / NBRC 14298).